We begin with the raw amino-acid sequence, 50 residues long: Sperm protamine P1 (50 aa).

2 disulfide bridges follow: cysteine 7–cysteine 15 and cysteine 38–cysteine 46.

Belongs to the protamine P1 family. Cross-linked by interchain disulfide bonds around the DNA-helix. In terms of tissue distribution, testis.

It localises to the nucleus. It is found in the chromosome. In terms of biological role, protamines substitute for histones in the chromatin of sperm during the haploid phase of spermatogenesis. They compact sperm DNA into a highly condensed, stable and inactive complex. This Equus asinus (Donkey) protein is Sperm protamine P1 (PRM1).